The chain runs to 701 residues: Arachidonate 12-lipoxygenase, 12R-type (701 aa).

Positions 2 to 119 constitute a PLAT domain; the sequence is ATYKVKVATG…TLALREATGK (118 aa). The 582-residue stretch at 120–701 folds into the Lipoxygenase domain; sequence ITADDTLPIL…PVLIENSISI (582 aa). 5 residues coordinate Fe cation: histidine 398, histidine 403, histidine 578, asparagine 582, and isoleucine 701.

The protein belongs to the lipoxygenase family. Requires Fe cation as cofactor. Expressed in skin epidermis and other stratified epithelia including tongue and forestomach. Low levels of expression are found in trachea, brain and lung. Not expressed in intestine, liver, kidney, adipose tissue, muscle or hematopoietic cells.

Its subcellular location is the cytoplasm. It localises to the perinuclear region. It carries out the reaction 1-O-methyl-(5Z,8Z,11Z,14Z)-eicosatetraenoate + O2 = 1-O-methyl (5Z,8Z,10E,12R,14Z)-hydroperoxyiecosatetraenoate. The catalysed reaction is 1-O-methyl-(5Z,8Z,11Z,14Z)-eicosatetraenoate + O2 = 1-O-methyl-8-hydroperoxy-(5Z,9E,11Z,14Z)-eicosatetraenoate. The enzyme catalyses (5Z,8Z,11Z,14Z)-eicosatetraenoate + O2 = (12R)-hydroperoxy-(5Z,8Z,10E,14Z)-eicosatetraenoate. It catalyses the reaction N-[omega-(9Z,12Z)-octadecadienoyloxy]acyl-beta-D-glucosyl-(1&lt;-&gt;1)-octadecasphing-4E-enine + O2 = N-[omega-(9R)-hydroperoxy-(10E,12Z)-octadecadienoyloxy]acyl-beta-D-glucosyl-(1&lt;-&gt;1)-octadecasphing-4E-enine. It carries out the reaction a N-[omega-(9Z,12Z)-octadecadienoyloxy]-acylsphin-4E-enine + O2 = a N-[omega-(9R)-hydroperoxy-(10E,12Z)-octadecadienoyloxy]-acylsphin-4E-enine. The catalysed reaction is (6Z,9Z,12Z)-octadecatrienoate + O2 = 10-hydroperoxy-(6Z,8E,12Z)-octadecatrienoate. The enzyme catalyses (4Z,7Z,10Z,13Z,16Z,19Z)-docosahexaenoate + O2 = 14-hydroperoxy-(4Z,7Z,10Z,12E,16Z,19Z)-docosahexaenoate. It catalyses the reaction (8Z,11Z,14Z)-eicosatrienoate + O2 = (8Z,10E,14Z)-12-hydroperoxyeicosatrienoate. It carries out the reaction (5Z,8Z,11Z,14Z,17Z)-eicosapentaenoate + O2 = (5Z,7Z,8Z,10E,14Z,17Z)-12-hydroperoxyeicosapentaenoate. The catalysed reaction is (6Z,9Z,12Z)-octadecatrienoate + O2 = 10R-hydroperoxy-(6Z,8E,12Z)-octadecatrienoate. The enzyme catalyses 1-O-methyl-(5Z,8Z,11Z,14Z)-eicosatetraenoate + O2 = 1-O-methyl-(8R)-hydroperoxy-(5Z,9E,11Z,14Z)-eicosatrienoate. It catalyses the reaction 1-O-methyl-(9Z,12Z)-octadecadienoate + O2 = 1-O-methyl-(9R)-hydroperoxy-(10E,12Z)-octadecadienoate. It carries out the reaction 1-O-methyl-20-hydroxy-(5Z,8Z,11Z,14Z)-eicosatetraenoate + O2 = 1-O-methyl-8-hydroperoxy-20-hydroxy-(5Z,9E,11Z,14Z)-eicosatetraenoate. The catalysed reaction is 1-O-methyl-20-hydroxy-(5Z,8Z,11Z,14Z)-eicosatetraenoate + O2 = 1-O-methyl-12-hydroperoxy-20-hydroxy-(5Z,8Z,10E,14Z)-eicosatetraenoate. The enzyme catalyses 1-O-methyl-20-hydroxy-(5Z,8Z,11Z,14Z)-eicosatetraenoate + O2 = 1-O-methyl-9-hydroperoxy-20-hydroxy-(5Z,7E,11Z,14Z)-eicosatetraenoate. It catalyses the reaction 1-O-methyl-(9Z,12Z)-octadecadienoate + O2 = 1-O-methyl-(13S)-hydroperoxy-(9Z,11E)-octadecadienoate. It participates in lipid metabolism; hydroperoxy eicosatetraenoic acid biosynthesis. It functions in the pathway lipid metabolism; sphingolipid metabolism. With respect to regulation, increased by calcium. Its function is as follows. Catalyzes the regio and stereo-specific incorporation of a single molecule of dioxygen into free and esterified polyunsaturated fatty acids generating lipid hydroperoxides that can be further reduced to the corresponding hydroxy species. Does not convert arachidonic acid to (12R)-hydroperoxyeicosatetraenoic acid/(12R)-HPETE. In the skin, acts upstream of ALOXE3 on the lineolate moiety of esterified omega-hydroxyacyl-sphingosine (EOS) ceramides to produce an epoxy-ketone derivative, a crucial step in the conjugation of omega-hydroxyceramide to membrane proteins. Therefore plays a crucial role in the synthesis of corneocytes lipid envelope and the establishment of the skin barrier to water loss. May also play a role in the regulation of the expression of airway mucins. The chain is Arachidonate 12-lipoxygenase, 12R-type from Mus musculus (Mouse).